We begin with the raw amino-acid sequence, 429 residues long: Uterine milk protein (429 aa).

The signal sequence occupies residues 1–25 (MSHRRMQLALSLVFILCGLFNSIFC). Asn222 and Asn268 each carry an N-linked (GlcNAc...) asparagine glycan.

Belongs to the serpin family. UTMP subfamily. In terms of processing, glycosylated; carries the so-called mannose 6-phosphate lysosomal recognition marker on its carbohydrate chains. Secreted by ovine endometrium under the influence of progesterone.

This Ovis aries (Sheep) protein is Uterine milk protein.